Here is a 99-residue protein sequence, read N- to C-terminus: Aspartyl/glutamyl-tRNA(Asn/Gln) amidotransferase subunit C (99 aa).

This sequence belongs to the GatC family. Heterotrimer of A, B and C subunits.

The enzyme catalyses L-glutamyl-tRNA(Gln) + L-glutamine + ATP + H2O = L-glutaminyl-tRNA(Gln) + L-glutamate + ADP + phosphate + H(+). The catalysed reaction is L-aspartyl-tRNA(Asn) + L-glutamine + ATP + H2O = L-asparaginyl-tRNA(Asn) + L-glutamate + ADP + phosphate + 2 H(+). Allows the formation of correctly charged Asn-tRNA(Asn) or Gln-tRNA(Gln) through the transamidation of misacylated Asp-tRNA(Asn) or Glu-tRNA(Gln) in organisms which lack either or both of asparaginyl-tRNA or glutaminyl-tRNA synthetases. The reaction takes place in the presence of glutamine and ATP through an activated phospho-Asp-tRNA(Asn) or phospho-Glu-tRNA(Gln). The sequence is that of Aspartyl/glutamyl-tRNA(Asn/Gln) amidotransferase subunit C from Burkholderia ambifaria (strain MC40-6).